The sequence spans 173 residues: Crossover junction endodeoxyribonuclease RuvC (173 aa).

Active-site residues include Asp-8, Glu-67, and Asp-139. Mg(2+)-binding residues include Asp-8, Glu-67, and Asp-139.

Belongs to the RuvC family. In terms of assembly, homodimer which binds Holliday junction (HJ) DNA. The HJ becomes 2-fold symmetrical on binding to RuvC with unstacked arms; it has a different conformation from HJ DNA in complex with RuvA. In the full resolvosome a probable DNA-RuvA(4)-RuvB(12)-RuvC(2) complex forms which resolves the HJ. Requires Mg(2+) as cofactor.

It is found in the cytoplasm. It carries out the reaction Endonucleolytic cleavage at a junction such as a reciprocal single-stranded crossover between two homologous DNA duplexes (Holliday junction).. In terms of biological role, the RuvA-RuvB-RuvC complex processes Holliday junction (HJ) DNA during genetic recombination and DNA repair. Endonuclease that resolves HJ intermediates. Cleaves cruciform DNA by making single-stranded nicks across the HJ at symmetrical positions within the homologous arms, yielding a 5'-phosphate and a 3'-hydroxyl group; requires a central core of homology in the junction. The consensus cleavage sequence is 5'-(A/T)TT(C/G)-3'. Cleavage occurs on the 3'-side of the TT dinucleotide at the point of strand exchange. HJ branch migration catalyzed by RuvA-RuvB allows RuvC to scan DNA until it finds its consensus sequence, where it cleaves and resolves the cruciform DNA. The polypeptide is Crossover junction endodeoxyribonuclease RuvC (Edwardsiella ictaluri (strain 93-146)).